The chain runs to 424 residues: Histidinol dehydrogenase (424 aa).

NAD(+)-binding residues include Tyr121, Gln183, and Asn206. Positions 229, 251, and 254 each coordinate substrate. Zn(2+) contacts are provided by Gln251 and His254. Catalysis depends on proton acceptor residues Glu319 and His320. Substrate-binding residues include His320, Asp353, Glu407, and His412. Asp353 lines the Zn(2+) pocket. His412 serves as a coordination point for Zn(2+).

This sequence belongs to the histidinol dehydrogenase family. The cofactor is Zn(2+).

It catalyses the reaction L-histidinol + 2 NAD(+) + H2O = L-histidine + 2 NADH + 3 H(+). The protein operates within amino-acid biosynthesis; L-histidine biosynthesis; L-histidine from 5-phospho-alpha-D-ribose 1-diphosphate: step 9/9. In terms of biological role, catalyzes the sequential NAD-dependent oxidations of L-histidinol to L-histidinaldehyde and then to L-histidine. The polypeptide is Histidinol dehydrogenase (Halalkalibacterium halodurans (strain ATCC BAA-125 / DSM 18197 / FERM 7344 / JCM 9153 / C-125) (Bacillus halodurans)).